Here is a 321-residue protein sequence, read N- to C-terminus: NADH-ubiquinone oxidoreductase chain 1 (321 aa).

8 consecutive transmembrane segments (helical) span residues 5–25 (LVTLNSLMYIIPILIAVAFLT), 74–94 (LLILSPLLAITAAMLIWAPIP), 104–124 (LGLLSILAISGMAVNSILWAG), 151–171 (GIILLSTLVLTGGFTIQLLTI), 175–195 (YTWLLTTSWPLTMMWFISTLA), 227–247 (FFLAEYANIITMNLLTCILFI), 256–276 (ELFLANLIAKTTILCLSFLWI), and 296–316 (FLPMTMALCLLHASLSISISG).

This sequence belongs to the complex I subunit 1 family.

It is found in the mitochondrion inner membrane. The enzyme catalyses a ubiquinone + NADH + 5 H(+)(in) = a ubiquinol + NAD(+) + 4 H(+)(out). In terms of biological role, core subunit of the mitochondrial membrane respiratory chain NADH dehydrogenase (Complex I) that is believed to belong to the minimal assembly required for catalysis. Complex I functions in the transfer of electrons from NADH to the respiratory chain. The immediate electron acceptor for the enzyme is believed to be ubiquinone. The protein is NADH-ubiquinone oxidoreductase chain 1 (MT-ND1) of Varanus baritji (Black-spotted ridge-tailed monitor).